We begin with the raw amino-acid sequence, 317 residues long: Forkhead box protein B2 (317 aa).

The segment at residues 13-107 is a DNA-binding region (fork-head); the sequence is KPPYSYISLT…ENGSFLRRRK (95 aa).

In terms of tissue distribution, first expressed within the dorsolateral ectoderm, except for the organizer territory. During gastrulation, expressed in 2 ectodermal stripes adjacent to the dorsal midline. With the onset of neurulation, expression shifts first to the neural plate before settling on the bottom of the neural tube, on top of the notochord. Expression is then absent until stage 35, at which stage a pair of cells in the fourth rhombomere in the dorsolateral outer area of the rhombencephalon show expression. This is followed shortly afterwards by expression in a pair of cells in rhombomere 6 at the ventricular side of the rhombencephalon.

The protein localises to the nucleus. Transcription factor. In Xenopus laevis (African clawed frog), this protein is Forkhead box protein B2.